The following is a 241-amino-acid chain: uncharacterized protein (241 aa).

A run of 6 helical transmembrane segments spans residues 1 to 21 (MMMA…GILL), 43 to 63 (FPII…LKNL), 75 to 95 (LPIY…FYAI), 108 to 128 (IYVL…VLML), 160 to 180 (VLTS…HGLL), and 200 to 220 (ILVI…IASG).

To M.jannaschii MJ0871, MJ0880 and MJ1556.

It localises to the cell membrane. This is an uncharacterized protein from Methanocaldococcus jannaschii (strain ATCC 43067 / DSM 2661 / JAL-1 / JCM 10045 / NBRC 100440) (Methanococcus jannaschii).